We begin with the raw amino-acid sequence, 439 residues long: Xylose isomerase (439 aa).

Active-site residues include H101 and D104. Positions 232, 268, 271, 296, 307, 309, and 339 each coordinate Mg(2+).

This sequence belongs to the xylose isomerase family. In terms of assembly, homotetramer. Requires Mg(2+) as cofactor.

The protein resides in the cytoplasm. It catalyses the reaction alpha-D-xylose = alpha-D-xylulofuranose. The sequence is that of Xylose isomerase from Serratia proteamaculans (strain 568).